We begin with the raw amino-acid sequence, 669 residues long: PAN2-PAN3 deadenylation complex subunit PAN3 (669 aa).

The segment covering 1–10 has biased composition (polar residues); it reads MATTFGSPSG. The interval 1–25 is disordered; sequence MATTFGSPSGDSRRGVASPRPKGRE. The C3H1-type zinc finger occupies 25-54; sequence EAKNTFCRNVTIYGHCRYENSKCRPPHLPD. The tract at residues 247 to 519 is pseudokinase domain; the sequence is QVMPNSTLPV…DIDNFLGGIS (273 aa). Residues Arg-298, 347 to 354, and 408 to 409 each bind ATP; these read DYHPNSKS and SK. Residues 520–558 are a coiled coil; it reads DQLASVFDSELHAQDTLTNTLGRELESSRIVRLLVKLNM. Residues 559-669 are knob domain; that stretch reads VNERPELDAS…LIRAGRGQGK (111 aa).

Belongs to the protein kinase superfamily. PAN3 family. In terms of assembly, homodimer. Forms a heterotrimer with a catalytic subunit PAN2 to form the poly(A)-nuclease (PAN) deadenylation complex. Interacts (via PAM-2 motif) with poly(A)-binding protein PAB1 (via PABC domain), conferring substrate specificity of the enzyme complex.

The protein resides in the cytoplasm. In terms of biological role, regulatory subunit of the poly(A)-nuclease (PAN) deadenylation complex, one of two cytoplasmic mRNA deadenylases involved in mRNA turnover. PAN specifically shortens poly(A) tails of RNA and the activity is stimulated by poly(A)-binding protein PAB1. PAN deadenylation is followed by rapid degradation of the shortened mRNA tails by the CCR4-NOT complex. Deadenylated mRNAs are then degraded by two alternative mechanisms, namely exosome-mediated 3'-5' exonucleolytic degradation, or deadenylation-dependent mRNA decaping and subsequent 5'-3' exonucleolytic degradation by XRN1. May also be involved in post-transcriptional maturation of mRNA poly(A) tails. PAN3 acts as a positive regulator for PAN activity, recruiting the catalytic subunit PAN2 to mRNA via its interaction with RNA and with PAB1. The polypeptide is PAN2-PAN3 deadenylation complex subunit PAN3 (Phaeosphaeria nodorum (strain SN15 / ATCC MYA-4574 / FGSC 10173) (Glume blotch fungus)).